We begin with the raw amino-acid sequence, 282 residues long: Transcription repressor OFP18 (282 aa).

The tract at residues 1-85 is disordered; it reads MVRKMKLPFL…YSSFSSTSHA (85 aa). The span at 15–35 shows a compositional bias: low complexity; that stretch reads SSSSFSSNSSSSSSSWPWPSS. Residues 36 to 47 show a composition bias toward polar residues; it reads HQQNLKTISSKA. Low complexity predominate over residues 66–85; it reads SFSSSPSSSSYSSFSSTSHA. The OVATE domain occupies 139 to 199; it reads LSLESNDPYT…FAAFVDLVLN (61 aa).

Expressed in roots and shoots.

The protein localises to the nucleus. In terms of biological role, transcriptional repressor that regulates multiple aspects of plant growth and development through the regulation of BEL1-LIKE (BLH) and KNOX TALE (KNAT) homeodomain transcription factors. In Arabidopsis thaliana (Mouse-ear cress), this protein is Transcription repressor OFP18 (OFP18).